Here is a 278-residue protein sequence, read N- to C-terminus: HTH-type transcriptional activator RhaS (278 aa).

The 99-residue stretch at Asn174–Gly272 folds into the HTH araC/xylS-type domain. 2 consecutive DNA-binding regions (H-T-H motif) follow at residues Glu191–Thr212 and Val239–Phe262.

Binds DNA as a dimer.

It is found in the cytoplasm. Functionally, activates expression of the rhaBAD and rhaT operons. The chain is HTH-type transcriptional activator RhaS from Salmonella paratyphi A (strain ATCC 9150 / SARB42).